We begin with the raw amino-acid sequence, 480 residues long: tRNA (guanine(37)-N(1))-methyltransferase (480 aa).

Residues His-244, 292–293, 321–322, and Asn-342 contribute to the S-adenosyl-L-methionine site; these read DL and DG.

This sequence belongs to the class I-like SAM-binding methyltransferase superfamily. TRM5/TYW2 family. In terms of assembly, monomer.

Its subcellular location is the mitochondrion matrix. It is found in the nucleus. The protein resides in the cytoplasm. It catalyses the reaction guanosine(37) in tRNA + S-adenosyl-L-methionine = N(1)-methylguanosine(37) in tRNA + S-adenosyl-L-homocysteine + H(+). Its function is as follows. Specifically methylates the N1 position of guanosine-37 in various cytoplasmic and mitochondrial tRNAs. Methylation is not dependent on the nature of the nucleoside 5' of the target nucleoside. This is the first step in the biosynthesis of wybutosine (yW), a modified base adjacent to the anticodon of tRNAs and required for accurate decoding. The protein is tRNA (guanine(37)-N(1))-methyltransferase of Thalassiosira pseudonana (Marine diatom).